The sequence spans 197 residues: Large ribosomal subunit protein bL25 (197 aa).

It belongs to the bacterial ribosomal protein bL25 family. CTC subfamily. In terms of assembly, part of the 50S ribosomal subunit; part of the 5S rRNA/L5/L18/L25 subcomplex. Contacts the 5S rRNA. Binds to the 5S rRNA independently of L5 and L18.

Functionally, this is one of the proteins that binds to the 5S RNA in the ribosome where it forms part of the central protuberance. The polypeptide is Large ribosomal subunit protein bL25 (Caulobacter vibrioides (strain ATCC 19089 / CIP 103742 / CB 15) (Caulobacter crescentus)).